Consider the following 485-residue polypeptide: UDP-N-acetylmuramate--L-alanine ligase (485 aa).

129–135 lines the ATP pocket; that stretch reads GTHGKTT.

The protein belongs to the MurCDEF family.

The protein localises to the cytoplasm. The catalysed reaction is UDP-N-acetyl-alpha-D-muramate + L-alanine + ATP = UDP-N-acetyl-alpha-D-muramoyl-L-alanine + ADP + phosphate + H(+). It functions in the pathway cell wall biogenesis; peptidoglycan biosynthesis. In terms of biological role, cell wall formation. This chain is UDP-N-acetylmuramate--L-alanine ligase, found in Vibrio parahaemolyticus serotype O3:K6 (strain RIMD 2210633).